Reading from the N-terminus, the 139-residue chain is Inactive palmitoleoyl-protein carboxylesterase notum1b (139 aa).

This sequence belongs to the pectinacetylesterase family. Notum subfamily.

In terms of biological role, probable inactive palmitoleoyl-protein carboxylesterase. The protein is Inactive palmitoleoyl-protein carboxylesterase notum1b of Danio rerio (Zebrafish).